The primary structure comprises 89 residues: Putative defensin-like protein 254 (89 aa).

Positions Met-1–Ser-20 are cleaved as a signal peptide. 2 disulfide bridges follow: Cys-31–Cys-48 and Cys-37–Cys-55.

The protein belongs to the DEFL family.

The protein resides in the secreted. In Arabidopsis thaliana (Mouse-ear cress), this protein is Putative defensin-like protein 254.